Reading from the N-terminus, the 194-residue chain is Peptidyl-tRNA hydrolase (194 aa).

A tRNA-binding site is contributed by tyrosine 17. Residue histidine 22 is the Proton acceptor of the active site. TRNA is bound by residues phenylalanine 69, asparagine 71, and asparagine 117.

The protein belongs to the PTH family. Monomer.

The protein localises to the cytoplasm. It carries out the reaction an N-acyl-L-alpha-aminoacyl-tRNA + H2O = an N-acyl-L-amino acid + a tRNA + H(+). Hydrolyzes ribosome-free peptidyl-tRNAs (with 1 or more amino acids incorporated), which drop off the ribosome during protein synthesis, or as a result of ribosome stalling. Its function is as follows. Catalyzes the release of premature peptidyl moieties from peptidyl-tRNA molecules trapped in stalled 50S ribosomal subunits, and thus maintains levels of free tRNAs and 50S ribosomes. In Renibacterium salmoninarum (strain ATCC 33209 / DSM 20767 / JCM 11484 / NBRC 15589 / NCIMB 2235), this protein is Peptidyl-tRNA hydrolase.